The following is a 257-amino-acid chain: Imidazole glycerol phosphate synthase subunit HisF (257 aa).

Residues aspartate 12 and aspartate 131 contribute to the active site.

It belongs to the HisA/HisF family. In terms of assembly, heterodimer of HisH and HisF.

The protein localises to the cytoplasm. It catalyses the reaction 5-[(5-phospho-1-deoxy-D-ribulos-1-ylimino)methylamino]-1-(5-phospho-beta-D-ribosyl)imidazole-4-carboxamide + L-glutamine = D-erythro-1-(imidazol-4-yl)glycerol 3-phosphate + 5-amino-1-(5-phospho-beta-D-ribosyl)imidazole-4-carboxamide + L-glutamate + H(+). The protein operates within amino-acid biosynthesis; L-histidine biosynthesis; L-histidine from 5-phospho-alpha-D-ribose 1-diphosphate: step 5/9. Its function is as follows. IGPS catalyzes the conversion of PRFAR and glutamine to IGP, AICAR and glutamate. The HisF subunit catalyzes the cyclization activity that produces IGP and AICAR from PRFAR using the ammonia provided by the HisH subunit. The sequence is that of Imidazole glycerol phosphate synthase subunit HisF from Rhodococcus jostii (strain RHA1).